We begin with the raw amino-acid sequence, 189 residues long: dCTP deaminase, dUMP-forming (189 aa).

Residues 101–106 (KSSLGR), Asp119, 127–129 (TLE), Gln148, Tyr162, and Gln174 contribute to the dCTP site. Catalysis depends on Glu129, which acts as the Proton donor/acceptor. The disordered stretch occupies residues 166–189 (AVGSKYQGQRGPTPSRSHLNFIKS). Residues 171–189 (YQGQRGPTPSRSHLNFIKS) are compositionally biased toward polar residues.

The protein belongs to the dCTP deaminase family. Homotrimer.

It catalyses the reaction dCTP + 2 H2O = dUMP + NH4(+) + diphosphate. The protein operates within pyrimidine metabolism; dUMP biosynthesis; dUMP from dCTP: step 1/1. Its function is as follows. Bifunctional enzyme that catalyzes both the deamination of dCTP to dUTP and the hydrolysis of dUTP to dUMP without releasing the toxic dUTP intermediate. The sequence is that of dCTP deaminase, dUMP-forming from Mycolicibacterium smegmatis (strain ATCC 700084 / mc(2)155) (Mycobacterium smegmatis).